The primary structure comprises 473 residues: 3-isopropylmalate dehydratase large subunit (473 aa).

The [4Fe-4S] cluster site is built by Cys349, Cys409, and Cys412.

It belongs to the aconitase/IPM isomerase family. LeuC type 1 subfamily. As to quaternary structure, heterodimer of LeuC and LeuD. Requires [4Fe-4S] cluster as cofactor.

The catalysed reaction is (2R,3S)-3-isopropylmalate = (2S)-2-isopropylmalate. Its pathway is amino-acid biosynthesis; L-leucine biosynthesis; L-leucine from 3-methyl-2-oxobutanoate: step 2/4. In terms of biological role, catalyzes the isomerization between 2-isopropylmalate and 3-isopropylmalate, via the formation of 2-isopropylmaleate. This is 3-isopropylmalate dehydratase large subunit from Gloeobacter violaceus (strain ATCC 29082 / PCC 7421).